The primary structure comprises 137 residues: Putative pre-16S rRNA nuclease (137 aa).

The protein belongs to the YqgF nuclease family.

It localises to the cytoplasm. Its function is as follows. Could be a nuclease involved in processing of the 5'-end of pre-16S rRNA. The polypeptide is Putative pre-16S rRNA nuclease (Clostridium botulinum (strain Alaska E43 / Type E3)).